A 356-amino-acid polypeptide reads, in one-letter code: UDP-3-O-acylglucosamine N-acyltransferase (356 aa).

Catalysis depends on His-242, which acts as the Proton acceptor.

It belongs to the transferase hexapeptide repeat family. LpxD subfamily. Homotrimer.

It carries out the reaction a UDP-3-O-[(3R)-3-hydroxyacyl]-alpha-D-glucosamine + a (3R)-hydroxyacyl-[ACP] = a UDP-2-N,3-O-bis[(3R)-3-hydroxyacyl]-alpha-D-glucosamine + holo-[ACP] + H(+). The protein operates within bacterial outer membrane biogenesis; LPS lipid A biosynthesis. In terms of biological role, catalyzes the N-acylation of UDP-3-O-acylglucosamine using 3-hydroxyacyl-ACP as the acyl donor. Is involved in the biosynthesis of lipid A, a phosphorylated glycolipid that anchors the lipopolysaccharide to the outer membrane of the cell. The chain is UDP-3-O-acylglucosamine N-acyltransferase from Acinetobacter baumannii (strain AB0057).